The chain runs to 303 residues: 2-dehydropantoate 2-reductase (303 aa).

NADP(+) is bound by residues 7–12, Arg-35, Asn-103, Ala-129, and Arg-131; that span reads GAGSLG. Position 103 (Asn-103) interacts with substrate. Residue Lys-182 is the Proton donor of the active site. Substrate-binding residues include Asn-186, Asn-190, Asn-200, and Ser-250. Glu-262 is a binding site for NADP(+).

The protein belongs to the ketopantoate reductase family.

The protein resides in the cytoplasm. The catalysed reaction is (R)-pantoate + NADP(+) = 2-dehydropantoate + NADPH + H(+). Its pathway is cofactor biosynthesis; (R)-pantothenate biosynthesis; (R)-pantoate from 3-methyl-2-oxobutanoate: step 2/2. Its function is as follows. Catalyzes the NADPH-dependent reduction of ketopantoate into pantoic acid. This chain is 2-dehydropantoate 2-reductase (panE), found in Pseudomonas aeruginosa (strain ATCC 15692 / DSM 22644 / CIP 104116 / JCM 14847 / LMG 12228 / 1C / PRS 101 / PAO1).